Consider the following 469-residue polypeptide: Adenosylhomocysteinase (469 aa).

Substrate-binding residues include Thr63, Asp139, and Glu164. 165–167 (TTT) lines the NAD(+) pocket. Lys194 and Asp198 together coordinate substrate. Residues Asn199, 228-233 (GYGDVG), Glu251, Asn300, 321-323 (IGH), and Asn375 each bind NAD(+).

Belongs to the adenosylhomocysteinase family. The cofactor is NAD(+).

Its subcellular location is the cytoplasm. It carries out the reaction S-adenosyl-L-homocysteine + H2O = L-homocysteine + adenosine. It functions in the pathway amino-acid biosynthesis; L-homocysteine biosynthesis; L-homocysteine from S-adenosyl-L-homocysteine: step 1/1. Its function is as follows. May play a key role in the regulation of the intracellular concentration of adenosylhomocysteine. The sequence is that of Adenosylhomocysteinase from Pseudomonas aeruginosa (strain UCBPP-PA14).